A 413-amino-acid polypeptide reads, in one-letter code: Protein esc1 (413 aa).

Polar residues predominate over residues 1–22 (MSSYALPSMQPTPTSSIPLRQM). Disordered stretches follow at residues 1-202 (MSSY…NQPS) and 230-265 (MYVP…YSQG). Residues 23-42 (SQPTTSAPSNSASSTPYSPQ) are compositionally biased toward low complexity. A compositionally biased stretch (polar residues) spans 43–63 (QVPLTHNSYPLSTPSSFQHGQ). Low complexity-rich tracts occupy residues 86–103 (SAAP…STAA) and 116–126 (SSSSYVYSVPP). Polar residues predominate over residues 127-136 (TNSTTSQASA). The segment covering 150 to 197 (STTLTPSTTDSSSTDVSSSDSVSTSASSSNASNTVSVTSPASSSATPL) has biased composition (low complexity). In terms of domain architecture, bHLH spans 334–385 (ELRTSHKLAERKRRKEIKELFDDLKDALPLDKSTKSSKWGLLTRAIQYIEQL).

Efficient DNA binding requires dimerization with another bHLH protein.

It localises to the nucleus. Its function is as follows. Involved in the sexual differentiation process. Modulate the ability of the cell to differentiate in response to the nitrogen starvation signal; in particular in response to decreases in the level of cellular cAMP. The protein is Protein esc1 (esc1) of Schizosaccharomyces pombe (strain 972 / ATCC 24843) (Fission yeast).